Reading from the N-terminus, the 350-residue chain is Holliday junction branch migration complex subunit RuvB (350 aa).

The large ATPase domain (RuvB-L) stretch occupies residues 4–184 (TDRLIAAQPQ…FGIVQRLEFY (181 aa)). ATP-binding positions include isoleucine 23, arginine 24, glycine 65, lysine 68, threonine 69, threonine 70, 131 to 133 (EDY), arginine 174, tyrosine 184, and arginine 221. A Mg(2+)-binding site is contributed by threonine 69. The tract at residues 185–255 (AVEELTEIVV…IADQALNMLH (71 aa)) is small ATPAse domain (RuvB-S). A head domain (RuvB-H) region spans residues 258–350 (RHGLDHMDRR…PLTPPGESDA (93 aa)). The DNA site is built by arginine 294, arginine 313, and arginine 318.

It belongs to the RuvB family. In terms of assembly, homohexamer. Forms an RuvA(8)-RuvB(12)-Holliday junction (HJ) complex. HJ DNA is sandwiched between 2 RuvA tetramers; dsDNA enters through RuvA and exits via RuvB. An RuvB hexamer assembles on each DNA strand where it exits the tetramer. Each RuvB hexamer is contacted by two RuvA subunits (via domain III) on 2 adjacent RuvB subunits; this complex drives branch migration. In the full resolvosome a probable DNA-RuvA(4)-RuvB(12)-RuvC(2) complex forms which resolves the HJ.

It localises to the cytoplasm. The enzyme catalyses ATP + H2O = ADP + phosphate + H(+). Functionally, the RuvA-RuvB-RuvC complex processes Holliday junction (HJ) DNA during genetic recombination and DNA repair, while the RuvA-RuvB complex plays an important role in the rescue of blocked DNA replication forks via replication fork reversal (RFR). RuvA specifically binds to HJ cruciform DNA, conferring on it an open structure. The RuvB hexamer acts as an ATP-dependent pump, pulling dsDNA into and through the RuvAB complex. RuvB forms 2 homohexamers on either side of HJ DNA bound by 1 or 2 RuvA tetramers; 4 subunits per hexamer contact DNA at a time. Coordinated motions by a converter formed by DNA-disengaged RuvB subunits stimulates ATP hydrolysis and nucleotide exchange. Immobilization of the converter enables RuvB to convert the ATP-contained energy into a lever motion, pulling 2 nucleotides of DNA out of the RuvA tetramer per ATP hydrolyzed, thus driving DNA branch migration. The RuvB motors rotate together with the DNA substrate, which together with the progressing nucleotide cycle form the mechanistic basis for DNA recombination by continuous HJ branch migration. Branch migration allows RuvC to scan DNA until it finds its consensus sequence, where it cleaves and resolves cruciform DNA. The polypeptide is Holliday junction branch migration complex subunit RuvB (Chromohalobacter salexigens (strain ATCC BAA-138 / DSM 3043 / CIP 106854 / NCIMB 13768 / 1H11)).